Consider the following 290-residue polypeptide: Small ribosomal subunit biogenesis GTPase RsgA (290 aa).

A CP-type G domain is found at 62-213 (KNSLVRPPIV…IADTPGFSSL (152 aa)). Residues 111–114 (SKTD) and 156–164 (GQTGVGKTT) contribute to the GTP site. Residues Cys-237, Cys-242, His-244, and Cys-250 each contribute to the Zn(2+) site.

Belongs to the TRAFAC class YlqF/YawG GTPase family. RsgA subfamily. As to quaternary structure, monomer. Associates with 30S ribosomal subunit, binds 16S rRNA. Zn(2+) serves as cofactor.

Its subcellular location is the cytoplasm. Its function is as follows. One of several proteins that assist in the late maturation steps of the functional core of the 30S ribosomal subunit. Helps release RbfA from mature subunits. May play a role in the assembly of ribosomal proteins into the subunit. Circularly permuted GTPase that catalyzes slow GTP hydrolysis, GTPase activity is stimulated by the 30S ribosomal subunit. The protein is Small ribosomal subunit biogenesis GTPase RsgA of Streptococcus mutans serotype c (strain ATCC 700610 / UA159).